The following is a 91-amino-acid chain: uncharacterized protein (91 aa).

Residues 1–21 form the signal peptide; the sequence is MKIISKMLVGALALAVTNVYA.

Belongs to the BhsA/McbA family.

It is found in the periplasm. This is an uncharacterized protein from Escherichia coli (strain K12).